A 308-amino-acid chain; its full sequence is Methionine synthase (308 aa).

Zn(2+)-binding residues include H201, C203, E224, and C285.

Belongs to the archaeal MetE family. Requires Zn(2+) as cofactor.

It participates in amino-acid biosynthesis; L-methionine biosynthesis via de novo pathway. Its function is as follows. Catalyzes the transfer of a methyl group to L-homocysteine resulting in methionine formation. Can use methylcobalamin and methylcobinamide as methyl donors, but methylcobalamin is not considered to be the physiological substrate. This Methanothermobacter thermautotrophicus (strain ATCC 29096 / DSM 1053 / JCM 10044 / NBRC 100330 / Delta H) (Methanobacterium thermoautotrophicum) protein is Methionine synthase.